The primary structure comprises 246 residues: UDP-N-acetyl-D-mannosaminuronic acid transferase (246 aa).

This sequence belongs to the glycosyltransferase 26 family.

It catalyses the reaction UDP-N-acetyl-alpha-D-mannosaminouronate + N-acetyl-alpha-D-glucosaminyl-di-trans,octa-cis-undecaprenyl diphosphate = beta-D-ManNAcA-(1-&gt;4)-alpha-D-GlcNAc-di-trans,octa-cis-undecaprenyl diphosphate + UDP + H(+). It participates in bacterial outer membrane biogenesis; enterobacterial common antigen biosynthesis. In terms of biological role, catalyzes the synthesis of Und-PP-GlcNAc-ManNAcA (Lipid II), the second lipid-linked intermediate involved in enterobacterial common antigen (ECA) synthesis. The chain is UDP-N-acetyl-D-mannosaminuronic acid transferase from Escherichia coli O1:K1 / APEC.